The chain runs to 143 residues: Peptide methionine sulfoxide reductase MsrB (143 aa).

One can recognise a MsrB domain in the interval 16 to 139 (DAELRRRLTP…NSAALNFESR (124 aa)). Zn(2+) contacts are provided by Cys-55, Cys-58, Cys-104, and Cys-107. Cys-128 acts as the Nucleophile in catalysis.

The protein belongs to the MsrB Met sulfoxide reductase family. The cofactor is Zn(2+).

It catalyses the reaction L-methionyl-[protein] + [thioredoxin]-disulfide + H2O = L-methionyl-(R)-S-oxide-[protein] + [thioredoxin]-dithiol. The sequence is that of Peptide methionine sulfoxide reductase MsrB from Burkholderia ambifaria (strain MC40-6).